Here is a 257-residue protein sequence, read N- to C-terminus: MPRFALKIEYDGAPFAGWQRQREQPSVQGAVEAALRGLQPDHAGIAAAGRTDAGVHALGQVAHVDLARDWDPFRLSEALNAHLRPAPVAVLAAARVGEDFHARFSALERSYLFRLLVRRAPATHDAGLVWRVMNPLDVEAMREGAKYLIGKHDFTTFRSTMCQAASPVKTLDEITIEESPRDAGTEFRFHLRARSFLHNQVRSIVGTLERVGAGAWDPADVKTALEARDRAACGPVCAPQGLYLRAVRYPEDPFKPA.

The active-site Nucleophile is Asp52. Tyr111 is a binding site for substrate.

It belongs to the tRNA pseudouridine synthase TruA family. Homodimer.

It catalyses the reaction uridine(38/39/40) in tRNA = pseudouridine(38/39/40) in tRNA. Functionally, formation of pseudouridine at positions 38, 39 and 40 in the anticodon stem and loop of transfer RNAs. The polypeptide is tRNA pseudouridine synthase A (Dinoroseobacter shibae (strain DSM 16493 / NCIMB 14021 / DFL 12)).